A 474-amino-acid chain; its full sequence is Putative matrix metalloproteinase (474 aa).

An N-terminal signal peptide occupies residues 1–17 (MIIYFAVITCSLKLCRS). H189 is a binding site for Zn(2+). E190 is a catalytic residue. Zn(2+) is bound by residues H193 and H199. One copy of the Hemopexin repeat lies at 299-344 (AGVYDAISYVRGDLYVFVGDLHWRFDTSGMLHNGYPQPTGATWRLP).

The protein belongs to the peptidase M10A family. Zn(2+) serves as cofactor.

This chain is Putative matrix metalloproteinase, found in Heliothis virescens ascovirus 3e (HvAV-3e).